The chain runs to 168 residues: Plastocyanin, chloroplastic (168 aa).

The transit peptide at 1–70 (MASVAAAAVS…SSLLLVASAN (70 aa)) directs the protein to the chloroplast. The Plastocyanin-like domain maps to 71–168 (AATVKMGGDD…AGMKGVVTVS (98 aa)). Residues His108, Cys153, His156, and Met161 each coordinate Cu cation.

This sequence belongs to the plastocyanin family. The cofactor is Cu(2+).

It is found in the plastid. Its subcellular location is the chloroplast thylakoid membrane. In terms of biological role, participates in electron transfer between P700 and the cytochrome b6-f complex in photosystem I. This Physcomitrium patens (Spreading-leaved earth moss) protein is Plastocyanin, chloroplastic (PETE).